Here is a 248-residue protein sequence, read N- to C-terminus: Uridylate kinase (248 aa).

11 to 14 (KISG) provides a ligand contact to ATP. A UMP-binding site is contributed by glycine 53. 2 residues coordinate ATP: glycine 54 and arginine 58. UMP contacts are provided by residues aspartate 74 and 135-142 (AGSPYLTT). 3 residues coordinate ATP: threonine 162, tyrosine 169, and aspartate 172.

The protein belongs to the UMP kinase family. As to quaternary structure, homohexamer.

It localises to the cytoplasm. It catalyses the reaction UMP + ATP = UDP + ADP. The protein operates within pyrimidine metabolism; CTP biosynthesis via de novo pathway; UDP from UMP (UMPK route): step 1/1. Its activity is regulated as follows. Inhibited by UTP. In terms of biological role, catalyzes the reversible phosphorylation of UMP to UDP. The protein is Uridylate kinase of Chlamydia pneumoniae (Chlamydophila pneumoniae).